The primary structure comprises 407 residues: Melanoma-associated antigen B6B (407 aa).

Residues 1-16 (MPRGQKSKLRARGKRR) are compositionally biased toward basic residues. The segment at 1–185 (MPRGQKSKLR…ESLSSSKRAA (185 aa)) is disordered. 2 stretches are compositionally biased toward polar residues: residues 56–68 (SGSS…QGAS) and 94–109 (PSTS…SQGA). Positions 123–132 (KSDEAAKGQN) are enriched in basic and acidic residues. Residues 133-155 (EKSPSTSRDASVPQESQGASPTG) show a composition bias toward polar residues. The 200-residue stretch at 195–394 (IKRKANKMVQ…GLYPHLYEDA (200 aa)) folds into the MAGE domain.

This is Melanoma-associated antigen B6B from Homo sapiens (Human).